Consider the following 1408-residue polypeptide: MSETSSHDSFYDSLSDVQEEGKSADFFPGLSAFLSQEEINKSLDLARRAIDSSETEDFDSEKEISQIFSKSPISLCETPSHEEPKSGKQTSSERPQDSRRAPVQPLTGDQAERITSPGSKRKPGVSPLLASPSYIRSLRKAEKRGAKNPNPSSKPKTAQQSKAGPQSQLCDKAASFIEELTSIFREAAKPRNRSPNGESSSPDSGYLSPKNQPSALMSASASQSPTADQLDQLEMDAEVKQAQGSLCYQAHQASEETLPLAHIPHPQPQKARHLPTAPRFIQKLRSQEVAEGSRVYLECRVTGNPTPRVRWFCEGKELYNSPDVQIHCESGELHTLVIAEAFEDDTGRYTCLATNPSGSDSTSAEVFIEGASSTDSDSESLSFISKAGAMPQAQKKTTSVSLTIGSSAPKTGVTTAVIQPLSVPVQQAHSATSYLCRPDGTTMGCLLPVFTKELQNTAASEGQVVVLECRVRGAPPLQVQWFRQGSEIQDSPDFRILQKKPRSTAEPEEICTLVIAESFPEDAGIFTCSATNDYGSVTSTAQLVITSANNENCSYDSTGEPNSDHFQHFPPPPPILETGSYELASQKPSEIQQVNSPNLGFSMAALQMQFNTAERETNGVHPSHGVNGLINGKAYGNKSPPTPTALLSPTKEPPPLLAKPKLDPLKLQQLQNQVRLEQEACAWPPAPPGVPCNSSSSGSSAPPSPPFPPPPPAFPELAACASPVPSEPMSALASRATAMQSSGSFNYARPKQFIAAQNLGPASGLPTPTSSPSSSSLPSPLSPTPRPFGRAPGPPFVEPEAMWGPSSPSPPPPPPPVFSPSAAYPVPDVFPLPPPPPPLPSSTSHCASPARFGPSQTPAAFLSALLPSQPPPVAVNALGLPKGVTPAGFPKKSSRTARIASDEEIQGTKDAVIQDLERKLRFKEDLLNNGQPRLTYEERMARRLLGADSANVFNIQEPEETAANQDAGAPRASVGGPLDGQKEYKVSSCEQRLISEIEYRLERSPVDESGDEVQDPDVPVENATAPFFEMKLKHYKIFEGMPVTFTCRVAGNPKPKIYWFKDGKQISPKSDHYTIQRDLDGTCSLHTTASTLDDDGNYTIMAANPQGRVSCTGRLMVQAVNQRGRSPRSPSGHPHARRPRSRSRDSGDENEPIQERFFRPHFLQAPGDLTVQEGKLCRMDCKVSGLPTPDLSWQLDGKPIRPDSAHKMLVRENGVHSLIIEPVTSRDAGIYTCIATNRAGQNSFNLELVVAAKEAHKAPVFMEKLQNTGVADGYPVRLECRVSGVPPPQIFWKKENESLTHSTERVSMHQDNHGYICLLIQGATKEDAGWYTVSAKNEAGIVSCTARLDVYTQWHQQPQTTKPKKVRPSASRYAALSDQGLDIKAAFQPEASPSHLTLNSGLVESEDL.

Residues 69–229 (SKSPISLCET…SASQSPTADQ (161 aa)) form a disordered region. Polar residues-rich tracts occupy residues 149-169 (PNPSSKPKTAQQSKAGPQSQL) and 193-229 (RSPNGESSSPDSGYLSPKNQPSALMSASASQSPTADQ). Residue serine 194 is modified to Phosphoserine. Ig-like C2-type domains follow at residues 278–367 (PRFI…AEVF) and 448–546 (PVFT…LVIT). 2 cysteine pairs are disulfide-bonded: cysteine 299–cysteine 351 and cysteine 469–cysteine 528. The interval 569-573 (FPPPP) is interaction with VASP. Disordered stretches follow at residues 631 to 660 (NGKAYGNKSPPTPTALLSPTKEPPPLLAKP) and 687 to 727 (PPGV…VPSE). A Phosphoserine modification is found at serine 639. Threonine 642 is modified (phosphothreonine). Serine 648 bears the Phosphoserine mark. Residues 653–683 (PPPLLAKPKLDPLKLQQLQNQVRLEQEACAW) form an interaction with LASP1 region. Positions 683 to 713 (WPPAPPGVPCNSSSSGSSAPPSPPFPPPPPA) are interaction with SORBS2, SPIN90 and SRC. The segment covering 691–701 (PCNSSSSGSSA) has biased composition (low complexity). Phosphoserine occurs at positions 700, 704, and 744. A compositionally biased stretch (pro residues) spans 702-714 (PPSPPFPPPPPAF). Disordered regions lie at residues 758-854 (NLGP…RFGP), 882-904 (KGVTPAGFPKKSSRTARIASDEE), and 960-981 (ETAANQDAGAPRASVGGPLDGQ). Residues 765–779 (LPTPTSSPSSSSLPS) are compositionally biased toward low complexity. Composition is skewed to pro residues over residues 780-797 (PLSPTPRPFGRAPGPPFV), 807-818 (SPSPPPPPPPVF), and 828-840 (DVFPLPPPPPPLP). The tract at residues 782 to 842 (SPTPRPFGRA…PPPPPPLPSS (61 aa)) is interaction with EPS8. The tract at residues 807–842 (SPSPPPPPPPVFSPSAAYPVPDVFPLPPPPPPLPSS) is interaction with SORBS2, SPIN90, SRC and PFN1. Residues 830–834 (FPLPP) are interaction with VASP. Residue serine 901 is modified to Phosphoserine. 2 positions are modified to phosphoserine: serine 1004 and serine 1009. An Ig-like C2-type 3 domain is found at 1026–1110 (PFFEMKLKHY…MAANPQGRVS (85 aa)). The tract at residues 1121–1150 (NQRGRSPRSPSGHPHARRPRSRSRDSGDEN) is disordered. Residues 1123–1133 (RGRSPRSPSGH) show a composition bias toward low complexity. A phosphoserine mark is found at serine 1126, serine 1129, serine 1131, and serine 1141. Serine 1143 is subject to Phosphoserine; by PKB/AKT1. Residue serine 1146 is modified to Phosphoserine. Ig-like C2-type domains lie at 1160–1251 (PHFL…LVVA) and 1259–1349 (PVFM…ARLD). 2 interaction with EZR regions span residues 1162 to 1251 (FLQA…LVVA) and 1261 to 1351 (FMEK…LDVY). The cysteines at positions 1181 and 1233 are disulfide-linked. Phosphoserine is present on serine 1377.

It belongs to the myotilin/palladin family. In terms of assembly, interacts with EPS8. Interacts with LASP1. Interacts with VASP. Interacts with ACTN. Interacts with SORBS2. Interacts with PFN1. Interacts with LPP. Interacts with SPIN90. Interacts with SRC. Interacts with EZR. Interacts with RAI14. Phosphorylated predominantly on serines and, to a lesser extent, on tyrosines. Phosphorylation at Ser-1143 by PKB/AKT1 modulates cytoskeletal organization and cell motility. As to expression, detected in both muscle and non-muscle tissues and cells (at protein level). Isoform 3 is widely expressed, isoform 4 is particularly abundant in tissues rich in smooth muscle and in the cardiac muscle and isoform 1 is detected in heart.

The protein localises to the cytoplasm. It localises to the cytoskeleton. Its subcellular location is the cell junction. It is found in the focal adhesion. The protein resides in the myofibril. The protein localises to the sarcomere. It localises to the z line. Its subcellular location is the cell projection. It is found in the ruffle. The protein resides in the podosome. The protein localises to the lamellipodium. It localises to the axon. Its subcellular location is the growth cone. Its function is as follows. Cytoskeletal protein required for organization of normal actin cytoskeleton. Roles in establishing cell morphology, motility, cell adhesion and cell-extracellular matrix interactions in a variety of cell types. May function as a scaffolding molecule with the potential to influence both actin polymerization and the assembly of existing actin filaments into higher-order arrays. Binds to proteins that bind to either monomeric or filamentous actin. Localizes at sites where active actin remodeling takes place, such as lamellipodia and membrane ruffles. Different isoforms may have functional differences. Involved in the control of morphological and cytoskeletal changes associated with dendritic cell maturation. Involved in targeting ACTN to specific subcellular locations. May be required for the initiation of neural tube closure. This chain is Palladin (Palld), found in Mus musculus (Mouse).